We begin with the raw amino-acid sequence, 467 residues long: tRNA(Ile)-lysidine synthase (467 aa).

35 to 40 (SGGPDS) contacts ATP.

This sequence belongs to the tRNA(Ile)-lysidine synthase family.

The protein localises to the cytoplasm. It carries out the reaction cytidine(34) in tRNA(Ile2) + L-lysine + ATP = lysidine(34) in tRNA(Ile2) + AMP + diphosphate + H(+). Functionally, ligates lysine onto the cytidine present at position 34 of the AUA codon-specific tRNA(Ile) that contains the anticodon CAU, in an ATP-dependent manner. Cytidine is converted to lysidine, thus changing the amino acid specificity of the tRNA from methionine to isoleucine. This Caldanaerobacter subterraneus subsp. tengcongensis (strain DSM 15242 / JCM 11007 / NBRC 100824 / MB4) (Thermoanaerobacter tengcongensis) protein is tRNA(Ile)-lysidine synthase.